A 113-amino-acid chain; its full sequence is Probable mesentericin-Y105 immunity protein (113 aa).

It belongs to the immunity protein EntA family.

In terms of biological role, imparts immunity to mesentericin-Y105 to naturally sensitive host strains. The polypeptide is Probable mesentericin-Y105 immunity protein (mesI) (Leuconostoc mesenteroides).